The sequence spans 116 residues: Large ribosomal subunit protein uL18 (116 aa).

It belongs to the universal ribosomal protein uL18 family. Part of the 50S ribosomal subunit; part of the 5S rRNA/L5/L18/L25 subcomplex. Contacts the 5S and 23S rRNAs.

In terms of biological role, this is one of the proteins that bind and probably mediate the attachment of the 5S RNA into the large ribosomal subunit, where it forms part of the central protuberance. The protein is Large ribosomal subunit protein uL18 of Saccharophagus degradans (strain 2-40 / ATCC 43961 / DSM 17024).